Here is a 222-residue protein sequence, read N- to C-terminus: Charged multivesicular body protein 2a (222 aa).

At methionine 1 the chain carries N-acetylmethionine. The stretch at 12–53 forms a coiled coil; that stretch reads EELLRQNQRALNRAMRELDRERQKLETQEKKIIADIKKMAKQ. The segment at 56-222 is interaction with VPS4B; it reads MDAVRIMAKD…EERLKNLRRD (167 aa). Polar residues predominate over residues 179–188; that stretch reads LSNLPSTGGS. Residues 179–198 form a disordered region; it reads LSNLPSTGGSLSVAAGGKKA. The residue at position 184 (serine 184) is a Phosphoserine. Threonine 185 is subject to Phosphothreonine. 3 positions are modified to phosphoserine: serine 188, serine 190, and serine 203. Residues 195–222 adopt a coiled-coil conformation; the sequence is GKKAEATASALADADADLEERLKNLRRD. The MIT-interacting motif motif lies at 210–220; it reads ADLEERLKNLR. Residues 217–222 are interaction with VTA1; it reads KNLRRD.

This sequence belongs to the SNF7 family. Probable core component of the endosomal sorting required for transport complex III (ESCRT-III). ESCRT-III components are thought to multimerize to form a flat lattice on the perimeter membrane of the endosome. Several assembly forms of ESCRT-III may exist that interact and act sequentially. In vitro, heteromerizes with CHMP3 (but not CHMP4) to form helical tubular structures that expose membrane-interacting sites on the outside whereas VPS4B can associate on the inside of the tubule. Interacts with CHMP1B, CHMP2B, CHMP3, CHMP4A, CHMP4B, CHMP4C and CHMP5. Interacts with VPS4A; the interaction is direct. Interacts with VPS4B; the interaction is direct. Interacts with MITD1. Interacts with VTA1; the interaction probably involves the open conformation of CHMP2A. Post-translationally, ISGylated in a CHMP5-dependent manner. Isgylation weakens and inhibits its interactions with VPS4A and VTA1 respectively. As to expression, widely expressed. Highly expressed in brain, heart, liver and kidney.

It localises to the late endosome membrane. The protein resides in the cytoplasm. It is found in the nucleus envelope. Probable core component of the endosomal sorting required for transport complex III (ESCRT-III) which is involved in multivesicular bodies (MVBs) formation and sorting of endosomal cargo proteins into MVBs. MVBs contain intraluminal vesicles (ILVs) that are generated by invagination and scission from the limiting membrane of the endosome and mostly are delivered to lysosomes enabling degradation of membrane proteins, such as stimulated growth factor receptors, lysosomal enzymes and lipids. The MVB pathway appears to require the sequential function of ESCRT-O, -I,-II and -III complexes. ESCRT-III proteins mostly dissociate from the invaginating membrane before the ILV is released. The ESCRT machinery also functions in topologically equivalent membrane fission events, such as the terminal stages of cytokinesis. Together with SPAST, the ESCRT-III complex promotes nuclear envelope sealing and mitotic spindle disassembly during late anaphase. Recruited to the reforming nuclear envelope (NE) during anaphase by LEMD2. ESCRT-III proteins are believed to mediate the necessary vesicle extrusion and/or membrane fission activities, possibly in conjunction with the AAA ATPase VPS4. This chain is Charged multivesicular body protein 2a (Chmp2a), found in Mus musculus (Mouse).